The following is a 467-amino-acid chain: Zinc finger and BTB domain-containing protein 43 (467 aa).

Met1 is modified (N-acetylmethionine). The BTB domain occupies 33–97 (CDVSIVVQGH…SYTGRLVMPA (65 aa)). Disordered regions lie at residues 134 to 153 (LNHG…GLVE) and 162 to 225 (HTDF…SAEF). Basic and acidic residues-rich tracts occupy residues 164 to 174 (DFPKAQELRDG) and 182 to 194 (KDEL…EHEY). Glycyl lysine isopeptide (Lys-Gly) (interchain with G-Cter in SUMO2) cross-links involve residues Lys182, Lys241, Lys247, Lys297, and Lys358. The C2H2-type 1; atypical zinc finger occupies 373 to 394 (YPCQCGKSFTHKSQRDRHMSMH). A C2H2-type 2 zinc finger spans residues 400-422 (YGCGVCGKKFKMKHHLVGHMKIH). At Thr423 the chain carries Phosphothreonine. A C2H2-type 3; atypical zinc finger spans residues 428-450 (YECNICAKRFMWRDSFHRHVTSC). A Glycyl lysine isopeptide (Lys-Gly) (interchain with G-Cter in SUMO2) cross-link involves residue Lys458.

This sequence belongs to the krueppel C2H2-type zinc-finger protein family. In terms of assembly, interacts with BDP1.

It is found in the nucleus. Functionally, may be involved in transcriptional regulation. The chain is Zinc finger and BTB domain-containing protein 43 (ZBTB43) from Homo sapiens (Human).